The chain runs to 100 residues: Large ribosomal subunit protein uL23 (100 aa).

This sequence belongs to the universal ribosomal protein uL23 family. As to quaternary structure, part of the 50S ribosomal subunit. Contacts protein L29, and trigger factor when it is bound to the ribosome.

Functionally, one of the early assembly proteins it binds 23S rRNA. One of the proteins that surrounds the polypeptide exit tunnel on the outside of the ribosome. Forms the main docking site for trigger factor binding to the ribosome. The chain is Large ribosomal subunit protein uL23 from Synechococcus sp. (strain CC9311).